Here is a 446-residue protein sequence, read N- to C-terminus: Inward rectifier potassium channel 4 (446 aa).

At 1-55 (MHGHSRNGQAHVPRRKRRNRFVKKNGQCNVYFANLSNKSQRYMADIFTTCVDTRW) the chain is on the cytoplasmic side. Residues 56-80 (RYMLMIFSAAFLVSWLFFGLLFWCI) traverse the membrane as a helical segment. Topologically, residues 81 to 120 (AFFHGDLEPSPSGPTAGGPGGNGGGAAPTAAKPCIMHVNG) are extracellular. The tract at residues 91-111 (PSGPTAGGPGGNGGGAAPTAA) is val/Gly/Ala/Pro stretch. The helical; Pore-forming intramembrane region spans 121 to 132 (FLGAFLFSVETQ). Residues 133–139 (TTIGYGF) constitute an intramembrane region (pore-forming). The short motif at 134–139 (TIGYGF) is the Selectivity filter element. Topologically, residues 140-148 (RCVTEECPL) are extracellular. A helical membrane pass occupies residues 149–170 (AVIAVVVQSIVGCVIDSFMIGT). Residues 171-446 (IMAKMPRPKK…NISYRRESAI (276 aa)) are Cytoplasmic-facing. The PDZ-binding motif lies at 444-446 (SAI).

Belongs to the inward rectifier-type potassium channel (TC 1.A.2.1) family. KCNJ4 subfamily. As to quaternary structure, homomultimeric and heteromultimeric association with KCNJ2 and KCNJ12. Interacts with DLG2 and DLG4. Associates, via its PDZ-recognition domain, with a complex containing LIN7A, LIN7B, LIN7C, DLG1, CASK and APBA1. Interacts with TAX1BP3. TAX1BP3 competes with LIN7 family members for KCNJ4 binding. In terms of tissue distribution, detected in kidney distal convoluted tubules (at protein level). Widely expressed throughout the brain. Also found in some peripheral tissues.

The protein localises to the cell membrane. It is found in the cytoplasmic vesicle membrane. The protein resides in the postsynaptic cell membrane. It catalyses the reaction K(+)(in) = K(+)(out). Its function is as follows. Inward rectifier potassium channels are characterized by a greater tendency to allow potassium to flow into the cell rather than out of it. Their voltage dependence is regulated by the concentration of extracellular potassium; as external potassium is raised, the voltage range of the channel opening shifts to more positive voltages. The inward rectification is mainly due to the blockage of outward current by internal magnesium. Can be blocked by extracellular barium and cesium. The polypeptide is Inward rectifier potassium channel 4 (Kcnj4) (Rattus norvegicus (Rat)).